The following is a 334-amino-acid chain: Tryptophan--tRNA ligase (334 aa).

Residues 11 to 13 (QPS) and 19 to 20 (GN) each bind ATP. The short motif at 12-20 (PSGELTIGN) is the 'HIGH' region element. Asp135 serves as a coordination point for L-tryptophan. ATP-binding positions include 147–149 (GED), Val186, and 195–199 (KMSKS). Positions 195-199 (KMSKS) match the 'KMSKS' region motif.

This sequence belongs to the class-I aminoacyl-tRNA synthetase family. Homodimer.

Its subcellular location is the cytoplasm. The enzyme catalyses tRNA(Trp) + L-tryptophan + ATP = L-tryptophyl-tRNA(Trp) + AMP + diphosphate + H(+). Its function is as follows. Catalyzes the attachment of tryptophan to tRNA(Trp). In Shigella flexneri, this protein is Tryptophan--tRNA ligase.